Consider the following 481-residue polypeptide: Matrilin-3 (481 aa).

The N-terminal stretch at 1–27 is a signal peptide; sequence MLLSAPLRHLPGLLLLLWPLLLLPSLA. Positions 78 to 253 constitute a VWFA domain; it reads DLVFIIDSSR…GVIEKLSARF (176 aa). Residue Arg-193 is modified to Omega-N-methylarginine. EGF-like domains follow at residues 259-300, 301-342, 343-384, and 385-426; these read ALDQ…KTCS, AIDK…RTCA, ALDK…KTCS, and VRNK…KTCS. 12 disulfides stabilise this stretch: Cys-263-Cys-274, Cys-270-Cys-284, Cys-286-Cys-299, Cys-305-Cys-316, Cys-312-Cys-326, Cys-328-Cys-341, Cys-347-Cys-358, Cys-354-Cys-368, Cys-370-Cys-383, Cys-389-Cys-400, Cys-396-Cys-410, and Cys-412-Cys-425. Residue Asn-321 is glycosylated (N-linked (GlcNAc...) asparagine). Ser-436 is modified (phosphoserine; by FAM20C). Residues 451 to 475 are a coiled coil; that stretch reads EKVSSHLQKLNTKLDNILKKLKVTE.

In terms of assembly, can form homooligomers (monomers, dimers, trimers and tetramers) and heterooligomers with matrilin-1. Interacts with COMP. Component of a complex containing at least CRELD2, MANF, MATN3 and PDIA4. In terms of tissue distribution, strongly expressed in growing skeletal tissue such as epiphyseal growth plate or in bone undergoing growth and remodeling. In the bone, actively synthesized in osteoblasts and osteocytes. Expressed in cartilage of sternum, femur, vertebrae, trachea, articular and epiphyseal cartilage, cartilage of developing bones and bones.

The protein resides in the secreted. In terms of biological role, major component of the extracellular matrix of cartilage and may play a role in the formation of extracellular filamentous networks. The polypeptide is Matrilin-3 (Matn3) (Mus musculus (Mouse)).